Consider the following 120-residue polypeptide: Spermidine export protein MdtJ (120 aa).

Helical transmembrane passes span 1-21 (MFYW…TLSM), 31-51 (TGFI…SFAV), 54-74 (IALG…ITLF), and 81-101 (EALS…IALI).

The protein belongs to the drug/metabolite transporter (DMT) superfamily. Small multidrug resistance (SMR) (TC 2.A.7.1) family. MdtJ subfamily. In terms of assembly, forms a complex with MdtI.

The protein localises to the cell inner membrane. In terms of biological role, catalyzes the excretion of spermidine. This Citrobacter koseri (strain ATCC BAA-895 / CDC 4225-83 / SGSC4696) protein is Spermidine export protein MdtJ.